The chain runs to 369 residues: Anhydro-N-acetylmuramic acid kinase (369 aa).

12 to 19 provides a ligand contact to ATP; that stretch reads GTSMDGVD.

The protein belongs to the anhydro-N-acetylmuramic acid kinase family.

The catalysed reaction is 1,6-anhydro-N-acetyl-beta-muramate + ATP + H2O = N-acetyl-D-muramate 6-phosphate + ADP + H(+). It functions in the pathway amino-sugar metabolism; 1,6-anhydro-N-acetylmuramate degradation. Its pathway is cell wall biogenesis; peptidoglycan recycling. Its function is as follows. Catalyzes the specific phosphorylation of 1,6-anhydro-N-acetylmuramic acid (anhMurNAc) with the simultaneous cleavage of the 1,6-anhydro ring, generating MurNAc-6-P. Is required for the utilization of anhMurNAc either imported from the medium or derived from its own cell wall murein, and thus plays a role in cell wall recycling. This is Anhydro-N-acetylmuramic acid kinase from Shewanella baltica (strain OS155 / ATCC BAA-1091).